A 307-amino-acid polypeptide reads, in one-letter code: Melanoma-associated antigen F1 (307 aa).

The interval 1 to 55 (MLQTPESRGLPVPQAEGEKDGGHDGETRAPTASQERPKEELGAGREEGAAEPALT) is disordered. Basic and acidic residues-rich tracts occupy residues 16-27 (EGEKDGGHDGET) and 35-48 (ERPK…REEG). In terms of domain architecture, MAGE spans 76–277 (LNRTVAELVQ…HWPVQYREAL (202 aa)).

As to quaternary structure, interacts (via MAGE domain) with RING-type zinc finger-containing E3 ubiquitin-protein ligases LNX1, TRIM27 and NSMCE1; the interaction is direct. Ubiquitous.

Enhances ubiquitin ligase activity of RING-type zinc finger-containing E3 ubiquitin ligases. Proposed to act through recruitment and/or stabilization of the E2 ubiquitin-conjugating enzyme at the E3:substrate complex. MAGEF1-NSMCE1 ubiquitin ligase complex promotes proteasomal degradation of MMS19, a key component of the cytosolic iron-sulfur protein assembly (CIA) machinery. Down-regulation of MMS19 impairs the activity of several DNA repair and metabolism enzymes such as ERCC2/XPD, FANCJ, RTEL1 and POLD1 that require iron-sulfur clusters as cofactors. May negatively regulate genome integrity by inhibiting homologous recombination-mediated double-strand break DNA repair. In Homo sapiens (Human), this protein is Melanoma-associated antigen F1.